Consider the following 369-residue polypeptide: Chorismate synthase (369 aa).

NADP(+) contacts are provided by Arg48 and Arg54. FMN contacts are provided by residues Arg125 to Ser127, Asn238 to Ala239, Gly278, Lys293 to Ser297, and Arg319.

The protein belongs to the chorismate synthase family. In terms of assembly, homotetramer. FMNH2 is required as a cofactor.

The enzyme catalyses 5-O-(1-carboxyvinyl)-3-phosphoshikimate = chorismate + phosphate. Its pathway is metabolic intermediate biosynthesis; chorismate biosynthesis; chorismate from D-erythrose 4-phosphate and phosphoenolpyruvate: step 7/7. Functionally, catalyzes the anti-1,4-elimination of the C-3 phosphate and the C-6 proR hydrogen from 5-enolpyruvylshikimate-3-phosphate (EPSP) to yield chorismate, which is the branch point compound that serves as the starting substrate for the three terminal pathways of aromatic amino acid biosynthesis. This reaction introduces a second double bond into the aromatic ring system. This chain is Chorismate synthase, found in Burkholderia mallei (strain NCTC 10229).